The sequence spans 546 residues: Delta-1-pyrroline-5-carboxylate dehydrogenase (546 aa).

NAD(+) is bound at residue 279 to 284 (KDISSN). E297 (proton acceptor) is an active-site residue. C331 acts as the Nucleophile in catalysis.

This sequence belongs to the aldehyde dehydrogenase family.

It localises to the cytoplasm. It carries out the reaction L-glutamate 5-semialdehyde + NAD(+) + H2O = L-glutamate + NADH + 2 H(+). The protein operates within amino-acid degradation; L-proline degradation into L-glutamate; L-glutamate from L-proline: step 2/2. In Agaricus bisporus (White button mushroom), this protein is Delta-1-pyrroline-5-carboxylate dehydrogenase (pruA).